The chain runs to 314 residues: Methionyl-tRNA formyltransferase (314 aa).

(6S)-5,6,7,8-tetrahydrofolate is bound at residue 110-113 (SLLP).

Belongs to the Fmt family.

The catalysed reaction is L-methionyl-tRNA(fMet) + (6R)-10-formyltetrahydrofolate = N-formyl-L-methionyl-tRNA(fMet) + (6S)-5,6,7,8-tetrahydrofolate + H(+). In terms of biological role, attaches a formyl group to the free amino group of methionyl-tRNA(fMet). The formyl group appears to play a dual role in the initiator identity of N-formylmethionyl-tRNA by promoting its recognition by IF2 and preventing the misappropriation of this tRNA by the elongation apparatus. The protein is Methionyl-tRNA formyltransferase of Bacillus cereus (strain G9842).